The primary structure comprises 241 residues: Chalcone--flavanone isomerase C (241 aa).

Substrate is bound by residues T50, N115, and S192.

It belongs to the chalcone isomerase family.

It carries out the reaction a chalcone = a flavanone.. The protein operates within secondary metabolite biosynthesis; flavonoid biosynthesis. In terms of biological role, catalyzes the intramolecular cyclization of bicyclic chalcones into tricyclic (S)-flavanones. Responsible for the isomerization of 4,2',4',6'-tetrahydroxychalcone (also termed chalcone) into naringenin. In Petunia hybrida (Petunia), this protein is Chalcone--flavanone isomerase C (CHI3).